A 413-amino-acid polypeptide reads, in one-letter code: Cyclic AMP-dependent transcription factor ATF-7 (413 aa).

Residues 1–285 form a transactivation domain region; sequence MGDDRPFVCS…GMVVGTASTM (285 aa). The C2H2-type zinc-finger motif lies at 7–31; sequence FVCSAPGCGQRFTNEDHLAVHKHKH. Thr-51 carries the phosphothreonine; by MAPK11 modification. Thr-53 and Thr-101 each carry phosphothreonine. Disordered regions lie at residues 81–140 and 299–337; these read ASDD…TTKP and HPDA…RRQR. Residue Lys-107 forms a Glycyl lysine isopeptide (Lys-Gly) (interchain with G-Cter in SUMO1) linkage. 2 stretches are compositionally biased toward low complexity: residues 114-126 and 307-320; these read VDSS…ASSP and QPQV…PSTG. The segment covering 326-337 has biased composition (basic and acidic residues); that stretch reads TVDEDPDERRQR. The bZIP domain maps to 332 to 395; that stretch reads DERRQRFLER…AQLKQLLLAH (64 aa). The segment at 334 to 354 is basic motif; sequence RRQRFLERNRAAASRCRQKRK. Residues 360–388 form a leucine-zipper region; the sequence is LEKKAEELTSQNIQLSNEVTLLRNEVAQL.

It belongs to the bZIP family. In terms of assembly, homodimer; binds DNA as homodimer. Heterodimer; heterodimerizes with other members of ATF family and with JUN family members. Interacts with JNK2; the interaction does not phosphorylate ATF7 but acts as a docking site for other ATF-associated partners such as JUN family members. Interacts (via its transactivation domain) with TAF12 the interaction potentiates the transactivation activity and is inhibited by ATF7 sumoylation. Interacts with TAF4; the interaction inhibits the TAF12-dependent transactivation. Interacts with MAPK9; the interaction does not phosphorylate ATF7 but acts as a docking site for ATF7-associated partners such as JUN. Interacts with Ku complex components XRCC6 and XRCC7. Interacts with TERT. In terms of processing, on EGF stimulation, phosphorylated first on Thr-53 allowing subsequent phosphorylation on Thr-51. This latter phosphorylation prevents sumoylation, increases binding to TAF12 and enhances transcriptional activity. Social isolation stress as well as TNF-alpha also induce the phosphorylation of ATF7. Phosphorylated in proliferating colonic and small intestinal epithelial cells. Sumoylation delays nuclear localization and inhibits transactivation activity through preventing binding to TAF12. RANBP2 appears to be the specific E3 ligase.

The protein resides in the nucleus. It localises to the nucleoplasm. Its subcellular location is the chromosome. The protein localises to the telomere. In terms of biological role, stress-responsive chromatin regulator that plays a role in various biological processes including innate immunological memory, adipocyte differentiation or telomerase regulation. In absence of stress, contributes to the formation of heterochromatin and heterochromatin-like structure by recruiting histone H3K9 tri- and di-methyltransferases thus silencing the transcription of target genes such as Htr5b, STAT1 in adipocytes, or genes involved in innate immunity in macrophages and adipocytes. Phosphorylation of ATF7 disrupts interactions with histone methyltransferase and enhances the association with coactivators containing histone acetyltransferase and/or histone demethylase, leading to disruption of the heterochromatin-like structure and subsequently transcriptional activation. In response to TNF-alpha, which is induced by various stresses, phosphorylated ATF7 and telomerase are released from telomeres leading to telomere shortening. Also plays a role in maintaining epithelial regenerative capacity and protecting against cell death during intestinal epithelial damage and repair. The polypeptide is Cyclic AMP-dependent transcription factor ATF-7 (Atf7) (Mus musculus (Mouse)).